The following is a 392-amino-acid chain: Phosphoglycerate kinase (392 aa).

Substrate is bound by residues 21–23 (DFN), Arg36, 59–62 (HLGR), Arg113, and Arg146. ATP contacts are provided by residues Lys197, Glu319, and 345–348 (GGDT).

The protein belongs to the phosphoglycerate kinase family. As to quaternary structure, monomer.

Its subcellular location is the cytoplasm. The enzyme catalyses (2R)-3-phosphoglycerate + ATP = (2R)-3-phospho-glyceroyl phosphate + ADP. It functions in the pathway carbohydrate degradation; glycolysis; pyruvate from D-glyceraldehyde 3-phosphate: step 2/5. The chain is Phosphoglycerate kinase from Francisella philomiragia subsp. philomiragia (strain ATCC 25017 / CCUG 19701 / FSC 153 / O#319-036).